The following is a 732-amino-acid chain: Sesterbrasiliatriene synthase PbSS (732 aa).

Residues 1-342 (MDFLSGAFHY…SRYHRDDLIT (342 aa)) form a terpene cyclase region. Mg(2+) is bound by residues Asp-105 and Asp-109. Residues Asp-105, Asp-109, 193-196 (RLSE), 242-246 (FNKEF), and 334-335 (RY) contribute to the substrate site. A DDXXD 1 motif is present at residues 105–109 (DDVTD). The NSE/DTE motif lies at 238-246 (DYYSFNKEF). The segment at 343 to 732 (TAGDRAMIVG…ARILLLGLGL (390 aa)) is prenyltransferase. 2 disordered regions span residues 371–390 (KSAT…WSDS) and 398–420 (ACYT…HKAN). A compositionally biased stretch (basic and acidic residues) spans 411–420 (NGTEAGHKAN). Lys-453, Arg-456, and His-485 together coordinate isopentenyl diphosphate. Mg(2+) is bound by residues Asp-492 and Asp-496. The DDXXD 2 signature appears at 492-496 (DDIED). Residue Arg-501 participates in dimethylallyl diphosphate binding. Arg-502 contacts isopentenyl diphosphate. Residues Lys-579, Thr-580, Gln-615, Asn-622, Lys-632, and Lys-642 each contribute to the dimethylallyl diphosphate site.

The protein in the N-terminal section; belongs to the terpene synthase family. This sequence in the C-terminal section; belongs to the FPP/GGPP synthase family. Hexamer. It depends on Mg(2+) as a cofactor.

The catalysed reaction is isopentenyl diphosphate + (2E,6E)-farnesyl diphosphate = (2E,6E,10E)-geranylgeranyl diphosphate + diphosphate. It catalyses the reaction isopentenyl diphosphate + (2E,6E,10E)-geranylgeranyl diphosphate = (2E,6E,10E,14E)-geranylfarnesyl diphosphate + diphosphate. It participates in secondary metabolite biosynthesis; terpenoid biosynthesis. Functionally, bifunctional sesterterpene synthase that possesses both prenyl transferase and terpene cyclase activity, converting isopentenyl diphosphate and dimethylallyl diphosphate into geranylfarnesyl diphosphate (GFPP) and further converting GFPP into sesterbrasiliatriene. This is Sesterbrasiliatriene synthase PbSS (PbSS) from Penicillium brasilianum.